The chain runs to 279 residues: Protein K1 (279 aa).

A signal peptide spans 1 to 18; sequence MFLYVVCSLAVCFRGLLS. Residues 19 to 220 lie on the Extracellular side of the membrane; the sequence is LSLQSSPNLC…TYLYIQEHLL (202 aa). The chain crosses the membrane as a helical span at residues 221 to 241; it reads VFMTLVALIGTMCGILGTIIF. The Cytoplasmic segment spans residues 242–279; sequence AHCQKQRDSNKTVPQQLQDYYSLHDLCTEDYTQPVDWY.

Homooligomer.

It is found in the host membrane. Its function is as follows. Promotes host cell survival pathways and may contribute to pathogenesis by preventing infected cells from undergoing apoptosis. Acts in host B-cells by mimicking the activated B-cell receptor complex. The cytoplasmic tail of K1 can induce the phosphorylation of a number of different kinases, leading to the activation of survival signaling pathways. This is Protein K1 (K1) from Human herpesvirus 8 type P (isolate GK18) (HHV-8).